The chain runs to 423 residues: Guanine nucleotide-binding protein subunit beta (423 aa).

WD repeat units follow at residues 90-120 (GHNN…LIWD), 132-162 (LDSQ…TIYR), 179-208 (GHTC…ALWD), 220-256 (DHLG…YIWD), 268-298 (VNDS…NMYD), 348-377 (DNQG…VVWD), and 389-419 (GHGG…KIWS).

The protein belongs to the WD repeat G protein beta family. As to quaternary structure, g proteins are composed of 3 units, alpha, beta and gamma. The beta-gamma subunit complex (STE4-STE18 complex) interacts with PLP1 and PLP2. Interacts with SYG1.

Its function is as follows. Implicated in the a- and alpha-factor response pathway. The beta and gamma chains of the putative yeast mating response pathway G protein play a positive role in initiation of the mating response. The beta and gamma chains are required for the GTPase activity, for replacement of GDP by GTP, and for G protein-effector interaction. This chain is Guanine nucleotide-binding protein subunit beta (STE4), found in Saccharomyces cerevisiae (strain ATCC 204508 / S288c) (Baker's yeast).